A 215-amino-acid polypeptide reads, in one-letter code: Large ribosomal subunit protein uL1 (215 aa).

It belongs to the universal ribosomal protein uL1 family. In terms of assembly, part of the 50S ribosomal subunit.

Its function is as follows. Binds directly to 23S rRNA. Probably involved in E site tRNA release. In terms of biological role, protein L1 is also a translational repressor protein, it controls the translation of its operon by binding to its mRNA. In Cenarchaeum symbiosum (strain A), this protein is Large ribosomal subunit protein uL1.